Consider the following 468-residue polypeptide: Protein CA_C1420 (468 aa).

The segment at 1–289 is unknown; the sequence is MSLNGFYLLP…LKELERIRKD (289 aa). In terms of domain architecture, AMMECR1 spans 296 to 468; the sequence is QEKDPYVKLA…KFMVTRHKES (173 aa).

The chain is Protein CA_C1420 from Clostridium acetobutylicum (strain ATCC 824 / DSM 792 / JCM 1419 / IAM 19013 / LMG 5710 / NBRC 13948 / NRRL B-527 / VKM B-1787 / 2291 / W).